The following is a 264-amino-acid chain: GATA transcription factor 2 (264 aa).

The segment covering 29-42 (SSSGGSTAATSSSS) has biased composition (low complexity). 2 disordered regions span residues 29–57 (SSSG…HHLP) and 96–192 (NPLG…TPQW). The span at 101 to 110 (TMTSVKTETS) shows a compositional bias: polar residues. The short motif at 114 to 121 (KPRSKRSR) is the Nuclear localization signal element. Residues 155–164 (SGGGGGGGGR) are compositionally biased toward gly residues. A GATA-type zinc finger spans residues 175-229 (GGGMRRCTHCASEKTPQWRTGPLGPKTLCNACGVRFKSGRLVPEYRPASSPTFVL).

Belongs to the type IV zinc-finger family. Class A subfamily. Mostly expressed in roots. Also expressed in flowers and leaves, and to a lower extent in stems.

The protein resides in the nucleus. Its function is as follows. Transcriptional activator that specifically binds 5'-GATA-3' or 5'-GAT-3' motifs within gene promoters. May be involved in the regulation of some light-responsive genes. In Arabidopsis thaliana (Mouse-ear cress), this protein is GATA transcription factor 2 (GATA2).